The chain runs to 340 residues: tRNA N6-adenosine threonylcarbamoyltransferase (340 aa).

Fe cation-binding residues include H115 and H119. Residues 138 to 142 (VVSGG), D171, G184, D188, and N278 each bind substrate. D306 contributes to the Fe cation binding site.

This sequence belongs to the KAE1 / TsaD family. The cofactor is Fe(2+).

It is found in the cytoplasm. It carries out the reaction L-threonylcarbamoyladenylate + adenosine(37) in tRNA = N(6)-L-threonylcarbamoyladenosine(37) in tRNA + AMP + H(+). Required for the formation of a threonylcarbamoyl group on adenosine at position 37 (t(6)A37) in tRNAs that read codons beginning with adenine. Is involved in the transfer of the threonylcarbamoyl moiety of threonylcarbamoyl-AMP (TC-AMP) to the N6 group of A37, together with TsaE and TsaB. TsaD likely plays a direct catalytic role in this reaction. In Clostridium botulinum (strain Kyoto / Type A2), this protein is tRNA N6-adenosine threonylcarbamoyltransferase.